Here is a 269-residue protein sequence, read N- to C-terminus: NAD-capped RNA hydrolase NudC (269 aa).

Arg-74 provides a ligand contact to substrate. Residues Cys-103, Cys-106, Cys-121, and Cys-124 each coordinate Zn(2+). Tyr-129 contributes to the substrate binding site. One can recognise a Nudix hydrolase domain in the interval 130-253; that stretch reads PRIFPCIIVA…TIARQLIENT (124 aa). A divalent metal cation is bound by residues Ala-163, Glu-179, and Glu-183. The Nudix box signature appears at 164 to 185; the sequence is GFLEVGETLEQCVAREVKEETG. 197 to 204 serves as a coordination point for substrate; sequence QPWAFPSS. A divalent metal cation is bound at residue Glu-224. Residue Ala-246 participates in substrate binding.

Belongs to the Nudix hydrolase family. NudC subfamily. Homodimer. It depends on Mg(2+) as a cofactor. Mn(2+) is required as a cofactor. The cofactor is Zn(2+).

The enzyme catalyses a 5'-end NAD(+)-phospho-ribonucleoside in mRNA + H2O = a 5'-end phospho-adenosine-phospho-ribonucleoside in mRNA + beta-nicotinamide D-ribonucleotide + 2 H(+). It carries out the reaction NAD(+) + H2O = beta-nicotinamide D-ribonucleotide + AMP + 2 H(+). It catalyses the reaction NADH + H2O = reduced beta-nicotinamide D-ribonucleotide + AMP + 2 H(+). MRNA decapping enzyme that specifically removes the nicotinamide adenine dinucleotide (NAD) cap from a subset of mRNAs by hydrolyzing the diphosphate linkage to produce nicotinamide mononucleotide (NMN) and 5' monophosphate mRNA. The NAD-cap is present at the 5'-end of some mRNAs and stabilizes RNA against 5'-processing. Has preference for mRNAs with a 5'-end purine. Catalyzes the hydrolysis of a broad range of dinucleotide pyrophosphates. The protein is NAD-capped RNA hydrolase NudC of Vibrio atlanticus (strain LGP32) (Vibrio splendidus (strain Mel32)).